Reading from the N-terminus, the 796-residue chain is Polyribonucleotide nucleotidyltransferase (796 aa).

The Mg(2+) site is built by Asp490 and Asp496. Positions 557–616 (PRIESIFINKDKIRNVIGSGGKNIRDICEKTGAKIEIIQDGTVMIYAVNNEAVEYAKSMI) constitute a KH domain. Positions 626 to 693 (GKVFEGTVVE…DREHVQLSMR (68 aa)) constitute an S1 motif domain. The segment covering 714–736 (SFSDDSSSSGTSSSGSSFKESYS) has biased composition (low complexity). Residues 714–796 (SFSDDSSSSG…HEVPRKPRFF (83 aa)) are disordered. The segment covering 740 to 755 (HGSHEKRRSGGSRSSR) has biased composition (basic residues). Residues 771–784 (SDFGNNNRSFSNSR) are compositionally biased toward low complexity. A compositionally biased stretch (basic and acidic residues) spans 785-796 (NGHEVPRKPRFF).

Belongs to the polyribonucleotide nucleotidyltransferase family. It depends on Mg(2+) as a cofactor.

It localises to the cytoplasm. The catalysed reaction is RNA(n+1) + phosphate = RNA(n) + a ribonucleoside 5'-diphosphate. In terms of biological role, involved in mRNA degradation. Catalyzes the phosphorolysis of single-stranded polyribonucleotides processively in the 3'- to 5'-direction. The protein is Polyribonucleotide nucleotidyltransferase of Ehrlichia canis (strain Jake).